Consider the following 86-residue polypeptide: Large ribosomal subunit protein bL27 (86 aa).

The tract at residues 1–24 is disordered; that stretch reads MAHKKAGGSSRNGRDSEGRRLGVK.

It belongs to the bacterial ribosomal protein bL27 family.

In Magnetococcus marinus (strain ATCC BAA-1437 / JCM 17883 / MC-1), this protein is Large ribosomal subunit protein bL27.